The primary structure comprises 244 residues: Haloacid dehalogenase-like hydrolase domain-containing protein 3 (244 aa).

This sequence belongs to the HAD-like hydrolase superfamily.

This Xenopus laevis (African clawed frog) protein is Haloacid dehalogenase-like hydrolase domain-containing protein 3 (hdhd3).